We begin with the raw amino-acid sequence, 90 residues long: uncharacterized protein (90 aa).

3 consecutive transmembrane segments (helical) span residues 5–27, 40–62, and 67–89; these read FDIL…IIYI, IYLS…TFVA, and MSVV…YSIV.

Its subcellular location is the cell membrane. This is an uncharacterized protein from Archaeoglobus fulgidus (strain ATCC 49558 / DSM 4304 / JCM 9628 / NBRC 100126 / VC-16).